The primary structure comprises 387 residues: 8-amino-7-oxononanoate synthase (387 aa).

Residue R20 participates in substrate binding. Residue 107-108 (GY) coordinates pyridoxal 5'-phosphate. H132 serves as a coordination point for substrate. 3 residues coordinate pyridoxal 5'-phosphate: S181, H209, and T238. Position 241 is an N6-(pyridoxal phosphate)lysine (K241). Substrate is bound at residue T355.

Belongs to the class-II pyridoxal-phosphate-dependent aminotransferase family. BioF subfamily. Homodimer. Pyridoxal 5'-phosphate is required as a cofactor.

It catalyses the reaction 6-carboxyhexanoyl-[ACP] + L-alanine + H(+) = (8S)-8-amino-7-oxononanoate + holo-[ACP] + CO2. The protein operates within cofactor biosynthesis; biotin biosynthesis. Catalyzes the decarboxylative condensation of pimeloyl-[acyl-carrier protein] and L-alanine to produce 8-amino-7-oxononanoate (AON), [acyl-carrier protein], and carbon dioxide. The polypeptide is 8-amino-7-oxononanoate synthase (Dechloromonas aromatica (strain RCB)).